Here is an 87-residue protein sequence, read N- to C-terminus: Small ribosomal subunit protein bS18 (87 aa).

The protein belongs to the bacterial ribosomal protein bS18 family. Part of the 30S ribosomal subunit. Forms a tight heterodimer with protein bS6.

Its function is as follows. Binds as a heterodimer with protein bS6 to the central domain of the 16S rRNA, where it helps stabilize the platform of the 30S subunit. The protein is Small ribosomal subunit protein bS18 of Mesomycoplasma hyopneumoniae (strain 232) (Mycoplasma hyopneumoniae).